A 255-amino-acid polypeptide reads, in one-letter code: 3-alpha-(or 20-beta)-hydroxysteroid dehydrogenase (255 aa).

10 to 34 lines the NAD(+) pocket; that stretch reads IITGGARGLGAEAARQAVAAGARVV. Ser139 lines the substrate pocket. The Proton acceptor role is filled by Tyr152.

The protein belongs to the short-chain dehydrogenases/reductases (SDR) family. In terms of assembly, homotetramer.

The catalysed reaction is androstan-3alpha,17beta-diol + NAD(+) = 17beta-hydroxyandrostanone + NADH + H(+). The protein operates within lipid metabolism; C21-steroid hormone metabolism. The polypeptide is 3-alpha-(or 20-beta)-hydroxysteroid dehydrogenase (Streptomyces exfoliatus (Streptomyces hydrogenans)).